Here is a 254-residue protein sequence, read N- to C-terminus: uncharacterized protein (254 aa).

This is an uncharacterized protein from Caenorhabditis elegans.